Consider the following 273-residue polypeptide: Zinc finger protein 80 (273 aa).

C2H2-type zinc fingers lie at residues 49–71 (YKCK…HQIH) and 77–99 (YECQ…MRIH). The C2H2-type 3; atypical zinc-finger motif lies at 105-127 (CKCVECGKVFNRRSHLLCYRQIH). 4 consecutive C2H2-type zinc fingers follow at residues 133–155 (YECS…RMTH), 161–183 (FGCK…MKIH), 189–211 (YKCG…SMTH), and 217–239 (YECK…TRSH).

It belongs to the krueppel C2H2-type zinc-finger protein family.

The protein localises to the nucleus. In terms of biological role, may be involved in transcriptional regulation. The sequence is that of Zinc finger protein 80 (ZNF80) from Gorilla gorilla gorilla (Western lowland gorilla).